We begin with the raw amino-acid sequence, 92 residues long: Phosphoribosyl-ATP pyrophosphatase (92 aa).

It belongs to the PRA-PH family.

It is found in the cytoplasm. It carries out the reaction 1-(5-phospho-beta-D-ribosyl)-ATP + H2O = 1-(5-phospho-beta-D-ribosyl)-5'-AMP + diphosphate + H(+). The protein operates within amino-acid biosynthesis; L-histidine biosynthesis; L-histidine from 5-phospho-alpha-D-ribose 1-diphosphate: step 2/9. In Leptospira biflexa serovar Patoc (strain Patoc 1 / ATCC 23582 / Paris), this protein is Phosphoribosyl-ATP pyrophosphatase.